The primary structure comprises 76 residues: Small ribosomal subunit protein eS17 (76 aa).

This sequence belongs to the eukaryotic ribosomal protein eS17 family.

This chain is Small ribosomal subunit protein eS17, found in Metallosphaera sedula (strain ATCC 51363 / DSM 5348 / JCM 9185 / NBRC 15509 / TH2).